The sequence spans 720 residues: Protein unc-112 (720 aa).

Disordered stretches follow at residues 145-170 (DLRRGTSDADNMNGPLSMRPGEESVG) and 210-236 (MGTLPRHGTLPRGVSPSPGAYNDTMRR). Residues 288–614 (WLDSSRSLME…ALPEHGIHYF (327 aa)) form the FERM domain. The PH domain maps to 402–507 (VPELADYLKY…WMAACRLASR (106 aa)).

This sequence belongs to the kindlin family. As to quaternary structure, interacts with pat-4/ILK. Probably forms a complex with pat-4 and pat-6. Component of an integrin containing attachment complex, composed of at least pat-2, pat-3, pat-4, pat-6, unc-52, unc-97 and unc-112. As to expression, mainly expressed in muscle cells in both embryos and adults.

It is found in the cell membrane. Its subcellular location is the cytoplasm. The protein resides in the myofibril. The protein localises to the sarcomere. It localises to the m line. In terms of biological role, component of an integrin containing attachment complex, which is required for muscle development and maintenance. Probable regulator of cell-extracellular matrix adhesion. Required during initial muscle assembly to form dense bodies and M-lines. This chain is Protein unc-112, found in Caenorhabditis elegans.